The following is a 397-amino-acid chain: Beta-lactamase (397 aa).

A signal peptide spans 1–26 (MRDTRFPCLCGIAASTLLFATTPAIA). The active-site Acyl-ester intermediate is serine 90. Positions 90, 146, 177, 179, and 370 each coordinate a beta-lactam. Catalysis depends on tyrosine 177, which acts as the Proton acceptor.

This sequence belongs to the class-C beta-lactamase family. Monomer.

The protein localises to the periplasm. It carries out the reaction a beta-lactam + H2O = a substituted beta-amino acid. Functionally, class C beta-lactamase which confers resistance to penicillins and cephalosporins. Has nitrocefin-hydrolyzing activity. The protein is Beta-lactamase (ampC) of Pseudomonas aeruginosa (strain ATCC 15692 / DSM 22644 / CIP 104116 / JCM 14847 / LMG 12228 / 1C / PRS 101 / PAO1).